The sequence spans 176 residues: Endothelin-2 (176 aa).

An N-terminal signal peptide occupies residues 1–22; sequence MVSPAWCSIALALLLALHEGKG. Residues 23–44 constitute a propeptide that is removed on maturation; that stretch reads QAAATMEQPASAPKGRGPHLRF. 2 disulfides stabilise this stretch: Cys47–Cys61 and Cys49–Cys57. The propeptide occupies 68–176; the sequence is VNTAGQTAPY…IPAHSRRRKR (109 aa). The interval 94-109 is endothelin-like; it reads CECSSAGDSACATFCH.

It belongs to the endothelin/sarafotoxin family.

It localises to the secreted. Its function is as follows. Vasoconstrictor. The protein is Endothelin-2 (Edn2) of Rattus norvegicus (Rat).